The following is a 3567-amino-acid chain: Zinc finger homeobox protein 4 (3567 aa).

An N-acetylmethionine modification is found at Met-1. 4 disordered regions span residues 1–54 (METC…LKTD), 425–480 (LSHS…AYSN), 522–545 (TSSSSATVSDDTEKKKQTAAVRAS), and 565–611 (SKDS…SPGS). Residues 9-28 (ISRQENGQSTSKLCGTTQLD) show a composition bias toward polar residues. Composition is skewed to basic and acidic residues over residues 39–54 (EPDRENSSTDDNLKTD) and 434–452 (KMSESKDQENNCERPKESN). Residues 468–480 (EPGDEDEEDAYSN) are compositionally biased toward acidic residues. C2H2-type zinc fingers lie at residues 613–636 (IECPKCDTVLGSSRSLGGHMTMMH), 644–667 (LKCPKCNWHYKYQQTLEAHMKEKH), and 699–723 (FRCEVCNYSTTTKGNLSIHMQSDKH). Residues 767-789 (WRCEVCDYETNVARNLRIHMTSE) form a C2H2-type 4; degenerate zinc finger. 3 C2H2-type zinc fingers span residues 917 to 941 (YQCKLCNYNTQLKANFQLHCKTDKH), 973 to 995 (LKCNACDYYTNSVDKLRLHTTNH), and 1021 to 1045 (YYCAVCDYTTKVKLNLVQHVRSVKH). Residues 1098 to 1160 (EQHEEAEGAI…EDVATKRSKP (63 aa)) are disordered. Composition is skewed to basic and acidic residues over residues 1120 to 1132 (TSERDNSEGKNSN) and 1148 to 1160 (AKEEDVATKRSKP). Residue Lys-1149 forms a Glycyl lysine isopeptide (Lys-Gly) (interchain with G-Cter in SUMO2) linkage. 2 consecutive C2H2-type zinc fingers follow at residues 1172–1195 (YQCPYCNYNSRDQSRIQMHVLSQH) and 1201–1224 (ICCPLCQDVLSNKMHLQLHLTHLH). A disordered region spans residues 1254-1324 (AASEKSERDT…WNKNSSKDVK (71 aa)). Over residues 1281 to 1310 (MDDKSMAGLEDSKANVEVKNEEQKPTKEPL) the composition is skewed to basic and acidic residues. Glycyl lysine isopeptide (Lys-Gly) (interchain with G-Cter in SUMO2) cross-links involve residues Lys-1299 and Lys-1324. C2H2-type zinc fingers lie at residues 1352-1374 (YRCNHCSLAFKTMQKLQIHSQYH) and 1380-1403 (TMCNLCQRSFRTFQALKKHLEAGH). The interval 1429–1480 (ETMSQDDHGLEQEMEREYEVDHEGKASPVGSDSSSIPDDMGSEPKRTLPFRK) is disordered. The segment covering 1433-1453 (QDDHGLEQEMEREYEVDHEGK) has biased composition (basic and acidic residues). Residues 1496-1522 (YKCTVCKESFTQKNILLVHYNSVSHLH) form a C2H2-type 12 zinc finger. Residue Lys-1546 forms a Glycyl lysine isopeptide (Lys-Gly) (interchain with G-Cter in SUMO2) linkage. The C2H2-type 13 zinc-finger motif lies at 1548–1572 (YKCSICNVAYSQSSTLEIHMRSVLH). 2 stretches are compositionally biased toward low complexity: residues 1761-1772 (TQPQLQPQKQQQ) and 1779-1791 (QQQQQQASKLLKQ). 2 disordered regions span residues 1761–1791 (TQPQLQPQKQQQQPPPPQQQQQQQASKLLKQ) and 1809–1858 (SYKE…IASG). Lys-1790 is covalently cross-linked (Glycyl lysine isopeptide (Lys-Gly) (interchain with G-Cter in SUMO2)). The span at 1809-1845 (SYKEAEDISEKPEKPKQEFISEGEGLKEGKDTKKQKS) shows a compositional bias: basic and acidic residues. Residues 1901–1924 (LECGTCGKLFSNVLILKSHQEHVH) form a C2H2-type 14 zinc finger. The interval 1948-2024 (YPISPSSPET…PPSAPPQVQL (77 aa)) is disordered. Composition is skewed to pro residues over residues 1955–1974 (PETPPPPPPPPPLPPAPPQP) and 1991–2019 (QAPPPTPPPPPPPPPPPPPPPPPPPPSAP). 2 consecutive DNA-binding regions (homeobox) follow at residues 2084 to 2143 (FKRP…RQRN) and 2181 to 2240 (KRSS…RKSY). A C2H2-type 15; degenerate zinc finger spans residues 2267–2291 (YQCKKCNVVFPRIFDLITHQKKQCY). Disordered stretches follow at residues 2289-2311 (QCYKDEDDDAQDESQTEDSMDAT) and 2328-2431 (AKNA…SPLQ). Positions 2293–2309 (DEDDDAQDESQTEDSMD) are enriched in acidic residues. Over residues 2331–2345 (AAAPAASSGSGTSTP) the composition is skewed to low complexity. Residues 2352–2370 (PEPEKTSPKPEYPAEKPKQ) show a composition bias toward basic and acidic residues. Positions 2419-2431 (SASQTPVPSSPLQ) are enriched in polar residues. The C2H2-type 16 zinc finger occupies 2448-2470 (YQCDQCTVAFPTLELWQEHQHMH). Polar residues predominate over residues 2507 to 2530 (LGSSLTQMPPQASSSHTTAPTTVA). The segment at 2507-2564 (LGSSLTQMPPQASSSHTTAPTTVAASLKRKLDDKEDNNCSEKEGGNSGEDQHRDKRLR) is disordered. A compositionally biased stretch (basic and acidic residues) spans 2535-2559 (RKLDDKEDNNCSEKEGGNSGEDQHR). Positions 2560–2619 (DKRLRTTITPEQLEILYEKYLLDSNPTRKMLDHIAREVGLKKRVVQVWFQNTRARERKGQ) form a DNA-binding region, homeobox 3. Residues 2630–2653 (KRCPFCRALFKAKSALESHIRSRH) form a C2H2-type 17 zinc finger. Ser-2663 is modified (phosphoserine). Polar residues predominate over residues 2764-2785 (AISDATTGDEGNTEMESTTGSS). Disordered stretches follow at residues 2764–2811 (AISD…TTPT) and 2829–2885 (HFND…PGHK). Residues 2830–2839 (FNDKDGDHDQ) are compositionally biased toward basic and acidic residues. Residues 2862 to 2874 (PSSPNPFGSSNPF) show a composition bias toward low complexity. The segment at residues 2884–2943 (HKRFRTQMSNLQLKVLKACFSDYRTPTMQECEMLGNEIGLPKRVVQVWFQNARAKEKKFK) is a DNA-binding region (homeobox 4). Residues 2962–2986 (PECTLCGVKYSARLSIRDHIFSKQH) form a C2H2-type 18 zinc finger. A compositionally biased stretch (low complexity) spans 3092-3110 (SATSSPALSLSSAPTKPLL). Disordered regions lie at residues 3092–3172 (SATS…KEEK) and 3281–3337 (LQKQ…LESK). Over residues 3111-3125 (QTPPPPPPPPPPPPS) the composition is skewed to pro residues. The segment covering 3126 to 3135 (SSLSGQQTEQ) has biased composition (polar residues). Over residues 3153–3172 (IKEEELEATKPEKHPKKEEK) the composition is skewed to basic and acidic residues. Lys-3154 is covalently cross-linked (Glycyl lysine isopeptide (Lys-Gly) (interchain with G-Cter in SUMO2)). Residues 3265 to 3294 (ALLQQYQQYQQNLQESLQKQQKQQQEQQQK) adopt a coiled-coil conformation. Positions 3281 to 3293 (LQKQQKQQQEQQQ) are enriched in low complexity. The span at 3294–3314 (KPVQAKTSKVESDQPQNSNDA) shows a compositional bias: polar residues. Residues 3315–3337 (SETKEDKSTATESTKEEPQLESK) show a composition bias toward basic and acidic residues. The C2H2-type 19; degenerate zinc-finger motif lies at 3354–3378 (FICRKCQMMFTDEDAAVNHQKSFCY). Residues 3398–3422 (YQCLACDVAISGNEALSQHLQSSLH) form a C2H2-type 20 zinc finger. 2 disordered regions span residues 3443 to 3462 (HSVCSPNPNTTSTSQSAASS) and 3511 to 3534 (STSGVQTSLPTESCSDESDSELSQ). Residues 3447 to 3462 (SPNPNTTSTSQSAASS) show a composition bias toward low complexity.

This sequence belongs to the krueppel C2H2-type zinc-finger protein family. As to expression, expressed in brain, skeletal muscle and liver. Very low expression in stomach.

Its subcellular location is the nucleus. Its function is as follows. May play a role in neural and muscle differentiation. May be involved in transcriptional regulation. The sequence is that of Zinc finger homeobox protein 4 (ZFHX4) from Homo sapiens (Human).